Reading from the N-terminus, the 239-residue chain is Ribonuclease PH (239 aa).

Residues arginine 86 and 124–126 each bind phosphate; that span reads GTR.

The protein belongs to the RNase PH family. As to quaternary structure, homohexameric ring arranged as a trimer of dimers.

The enzyme catalyses tRNA(n+1) + phosphate = tRNA(n) + a ribonucleoside 5'-diphosphate. In terms of biological role, phosphorolytic 3'-5' exoribonuclease that plays an important role in tRNA 3'-end maturation. Removes nucleotide residues following the 3'-CCA terminus of tRNAs; can also add nucleotides to the ends of RNA molecules by using nucleoside diphosphates as substrates, but this may not be physiologically important. Probably plays a role in initiation of 16S rRNA degradation (leading to ribosome degradation) during starvation. The polypeptide is Ribonuclease PH (Anaeromyxobacter dehalogenans (strain 2CP-1 / ATCC BAA-258)).